The chain runs to 410 residues: Regulator of microtubule dynamics protein 2 (410 aa).

The chain crosses the membrane as a helical span at residues Leu-9–His-28. The residue at position 51 (Ser-51) is a Phosphoserine. Residues Phe-68–Glu-110 are a coiled coil. Ser-121 carries the phosphoserine modification. The segment covering Pro-122 to Leu-131 has biased composition (basic residues). The interval Pro-122–Phe-164 is disordered. Position 139 is a phosphothreonine (Thr-139). The residue at position 152 (Tyr-152) is a Phosphotyrosine. Phosphothreonine occurs at positions 154 and 157.

Belongs to the RMDN family. In terms of assembly, interacts with microtubules.

The protein localises to the membrane. Its subcellular location is the cytoplasm. It localises to the cytoskeleton. The protein resides in the spindle. It is found in the spindle pole. The sequence is that of Regulator of microtubule dynamics protein 2 (RMDN2) from Homo sapiens (Human).